Reading from the N-terminus, the 466-residue chain is 20-hydroxyecdysone protein (466 aa).

A signal peptide spans 1 to 16 (MKPVALILVFLAISQA). The stretch at 48–50 (EVK) is one 1; approximate repeat. The interval 48–157 (EVKAEEVKPE…EIKKEATEIK (110 aa)) is 16 X repeats. One copy of the 2; approximate repeat lies at 53–55 (EVK). Residues 55-94 (KPEEVKPIAQEEKAKDLKEEVKPEIKPEIKEQPKPDIKDE) are disordered. One copy of the 3; approximate repeat lies at 58–60 (EVK). One copy of the 4; approximate repeat lies at 70–72 (DLK). Residues 74 to 76 (EVK) form a 5; approximate repeat. A 6; approximate repeat occupies 78–80 (EIK). One copy of the 7; approximate repeat lies at 82-84 (EIK). The stretch at 90–92 (DIK) is one 8; approximate repeat. The stretch at 94–96 (EIK) is one 9; approximate repeat. The 10; approximate repeat unit spans residues 98-100 (DLK). An 11; approximate repeat occupies 102–104 (DIK). A 12; approximate repeat occupies 106-108 (ELK). Residues 119 to 220 (PNAKPLELKE…QQSTTQGNFV (102 aa)) form a disordered region. The segment covering 124-160 (LELKEKSLEAEEKPQEIKEEVQQPEIKKEATEIKEEP) has biased composition (basic and acidic residues). Residues 125 to 127 (ELK) form a 13; approximate repeat. The stretch at 139-141 (EIK) is one 14; approximate repeat. A 15; approximate repeat occupies 148–150 (EIK). One copy of the 16; approximate repeat lies at 155-157 (EIK). A compositionally biased stretch (low complexity) spans 170 to 180 (AEETVVVPAEE). Over residues 185–194 (PVEQEQSENQ) the composition is skewed to polar residues. A compositionally biased stretch (low complexity) spans 203-216 (QATQATPTQQSTTQ). Residues Asn-294 and Asn-352 are each glycosylated (N-linked (GlcNAc...) asparagine). The tract at residues 378–435 (RPQNAPAAAPATQATEKPAVDDKIDPANDEVGEFVPESDNELRASGENIDDSFEDAGV) is disordered. Residues 379-394 (PQNAPAAAPATQATEK) show a composition bias toward low complexity. The segment covering 404 to 416 (ANDEVGEFVPESD) has biased composition (acidic residues).

The protein localises to the secreted. Its function is as follows. Probably has an essential role in embryogenesis, induces morphogenesis of imaginal disks, and may participate in multimolecular aggregates. The sequence is that of 20-hydroxyecdysone protein (ImpE2) from Drosophila melanogaster (Fruit fly).